A 333-amino-acid polypeptide reads, in one-letter code: Eukaryotic translation initiation factor 2 subunit 2 (333 aa).

Disordered stretches follow at residues 1 to 87, 98 to 117, and 141 to 165; these read MSGD…KSKK, IKDL…EEDL, and EKDE…QTGP. Residue S2 is modified to N-acetylserine. Phosphoserine occurs at positions 2 and 13. The segment covering 13-22 has biased composition (basic residues); it reads SKKKKKKKKP. T36 carries the post-translational modification Phosphothreonine. Positions 40–51 are enriched in basic and acidic residues; the sequence is ETKEVEPEPTED. S67 is modified (phosphoserine). A Glycyl lysine isopeptide (Lys-Gly) (interchain with G-Cter in SUMO2) cross-link involves residue K102. S105 is modified (phosphoserine). Positions 106–117 are enriched in acidic residues; sequence DVQEPAEPEEDL. A phosphoserine mark is found at S158 and S218. 2 positions are modified to N6-acetyllysine: K265 and K293. Residues 281–305 form a C4-type zinc finger; the sequence is CHTCRSPDTILQKDTRLYFLQCETC.

This sequence belongs to the eIF-2-beta/eIF-5 family. Eukaryotic translation initiation factor 2 eIF2 is a heterotrimeric complex composed of an alpha (EIF2S1), a beta (EIF2S2) and a gamma (EIF2S3) chain. eIF2 is member of the 43S pre-initiation complex (43S PIC). eIF2 forms a complex with at least CELF1/CUGBP1, CALR, CALR3, EIF2S1, EIF2S2, HSP90B1 and HSPA5. Interacts with BZW2/5MP1. Interacts with EIF5.

It is found in the cytoplasm. Its subcellular location is the cytosol. Functionally, component of the eIF2 complex that functions in the early steps of protein synthesis by forming a ternary complex with GTP and initiator tRNA. This complex binds to a 40S ribosomal subunit, followed by mRNA binding to form a 43S pre-initiation complex (43S PIC). Junction of the 60S ribosomal subunit to form the 80S initiation complex is preceded by hydrolysis of the GTP bound to eIF2 and release of an eIF2-GDP binary complex. In order for eIF2 to recycle and catalyze another round of initiation, the GDP bound to eIF2 must exchange with GTP by way of a reaction catalyzed by eIF2B. In Bos taurus (Bovine), this protein is Eukaryotic translation initiation factor 2 subunit 2 (EIF2S2).